The primary structure comprises 195 residues: MQQQQSPQMFPMVPSIPPANNITTEQIQKYLDENKKLIMAIMENQNLGKLAECAQYQALLQKNLMYLAAIADAQPPPPTPGPSPSTAVAAQMATPHSGMQPPSYFMQHPQASPAGIFAPRGPLQFGSPLQFQDPQQQQQIHQQAMQGHMGIRPMGMTNNGMQHAMQQPETGLGGNVGLRGGKQDGADGQGKDDGK.

The disordered stretch occupies residues 166–195 (QQPETGLGGNVGLRGGKQDGADGQGKDDGK). Residues 171 to 180 (GLGGNVGLRG) show a composition bias toward gly residues. Residues 181–195 (GKQDGADGQGKDDGK) are compositionally biased toward basic and acidic residues.

Belongs to the SS18 family. Interacts with GRF1. In terms of tissue distribution, predominantly expressed in shoot tips containing the shoot apical meristem (SAM) and flower buds. Also expressed in mature flowers.

Its function is as follows. Transcription coactivator that plays a role in the regulation of cell expansion in leaf and cotyledons tissues. Component of a network formed by miR396, the GRFs and their interacting factors (GIFs) acting in the regulation of meristem function, at least partially through the control of cell proliferation. GIFs are involved in the positive regulation of cell proliferation of lateral organs in a functionally redundant manner. This is GRF1-interacting factor 2 (GIF2) from Arabidopsis thaliana (Mouse-ear cress).